The chain runs to 443 residues: UDP-N-acetylmuramate--L-alanine ligase (443 aa).

110 to 116 provides a ligand contact to ATP; that stretch reads GAHGKTS.

The protein belongs to the MurCDEF family.

The protein localises to the cytoplasm. It catalyses the reaction UDP-N-acetyl-alpha-D-muramate + L-alanine + ATP = UDP-N-acetyl-alpha-D-muramoyl-L-alanine + ADP + phosphate + H(+). Its pathway is cell wall biogenesis; peptidoglycan biosynthesis. Functionally, cell wall formation. This Streptococcus suis (strain 98HAH33) protein is UDP-N-acetylmuramate--L-alanine ligase.